The sequence spans 496 residues: MIEIDGRSLRVEDVYAVAVEYDRVSISDDTLKAVEEKHEAFLKLINSGKTVYGVNTGFGSLLNVHIERDQEIELQKNLIRSHSSGVGDYLENRYVRAIMAVRLNSLAAGYSAVSADLLNMMVEMLNRDVIPAVPKYGSVGASGDLAPLAHIGLAMMGEGKAFFEGRLMDSARALEKAGLKPYQFKEKEGVALINGTSFMSGILSIAVMDAHDILENAIRSALLSFEALGGTSKAFTPWILGARPHLGQVAIGNRFREYLTGSDIVKRADSVKVQDAYTLRCIPQVYGSVADVIDYVENVLSVEINSATDNPLFNGEEVVSGGNFHGEPVALAADFLAIALTDLGNMVERRIARLVDTNLSGLPPFLTPDSGLNSGYMIPQYTAAALCNRNKVLAYPSSADTIPTSANQEDHVSMGATGSLKLLEIIDNVRYIIAIEYLLGSQALEFTDKGMSPSTRKIYEKIREKVEKLDHDRPPSFDIETIRKMMDKKEFISALP.

Positions alanine 141–glycine 143 form a cross-link, 5-imidazolinone (Ala-Gly). The residue at position 142 (serine 142) is a 2,3-didehydroalanine (Ser).

The protein belongs to the PAL/histidase family. In terms of processing, contains an active site 4-methylidene-imidazol-5-one (MIO), which is formed autocatalytically by cyclization and dehydration of residues Ala-Ser-Gly.

The protein resides in the cytoplasm. The enzyme catalyses L-histidine = trans-urocanate + NH4(+). Its pathway is amino-acid degradation; L-histidine degradation into L-glutamate; N-formimidoyl-L-glutamate from L-histidine: step 1/3. The sequence is that of Probable histidine ammonia-lyase from Thermoplasma acidophilum (strain ATCC 25905 / DSM 1728 / JCM 9062 / NBRC 15155 / AMRC-C165).